We begin with the raw amino-acid sequence, 572 residues long: Urease subunit alpha (572 aa).

In terms of domain architecture, Urease spans 130-572 (GGVDTHIHFI…LPMAQRYFLF (443 aa)). Ni(2+)-binding residues include His-135, His-137, and Lys-218. The residue at position 218 (Lys-218) is an N6-carboxylysine. His-220 serves as a coordination point for substrate. Ni(2+) contacts are provided by His-247 and His-273. The active-site Proton donor is His-321. Asp-361 lines the Ni(2+) pocket.

This sequence belongs to the metallo-dependent hydrolases superfamily. Urease alpha subunit family. Heterotrimer of UreA (gamma), UreB (beta) and UreC (alpha) subunits. Three heterotrimers associate to form the active enzyme. Ni cation serves as cofactor. Post-translationally, carboxylation allows a single lysine to coordinate two nickel ions.

Its subcellular location is the cytoplasm. The enzyme catalyses urea + 2 H2O + H(+) = hydrogencarbonate + 2 NH4(+). Its pathway is nitrogen metabolism; urea degradation; CO(2) and NH(3) from urea (urease route): step 1/1. This is Urease subunit alpha from Ralstonia nicotianae (strain ATCC BAA-1114 / GMI1000) (Ralstonia solanacearum).